The sequence spans 666 residues: DNA ligase (666 aa).

NAD(+)-binding positions include 34-38, 83-84, and Glu114; these read DEEYD and SL. Residue Lys116 is the N6-AMP-lysine intermediate of the active site. NAD(+)-binding residues include Arg137, Glu174, Lys290, and Lys314. Positions 408, 411, 424, and 429 each coordinate Zn(2+). Positions 584 to 666 constitute a BRCT domain; that stretch reads SIEGPLKGLT…LKMVKREHNG (83 aa).

Belongs to the NAD-dependent DNA ligase family. LigA subfamily. The cofactor is Mg(2+). Mn(2+) serves as cofactor.

It catalyses the reaction NAD(+) + (deoxyribonucleotide)n-3'-hydroxyl + 5'-phospho-(deoxyribonucleotide)m = (deoxyribonucleotide)n+m + AMP + beta-nicotinamide D-nucleotide.. Its function is as follows. DNA ligase that catalyzes the formation of phosphodiester linkages between 5'-phosphoryl and 3'-hydroxyl groups in double-stranded DNA using NAD as a coenzyme and as the energy source for the reaction. It is essential for DNA replication and repair of damaged DNA. The protein is DNA ligase of Coprothermobacter proteolyticus (strain ATCC 35245 / DSM 5265 / OCM 4 / BT).